A 755-amino-acid chain; its full sequence is Biodegradative arginine decarboxylase (755 aa).

An N6-(pyridoxal phosphate)lysine modification is found at Lys-386.

This sequence belongs to the Orn/Lys/Arg decarboxylase class-I family. As to quaternary structure, homodecamer. The basic unit is a homodimer, organized into a ring of giving a pentamer of five homodimers. Pyridoxal 5'-phosphate serves as cofactor.

It is found in the cytoplasm. The catalysed reaction is L-arginine + H(+) = agmatine + CO2. Its activity is regulated as follows. Homodimers are probably inactive, their assembly into a homodecamer at low pH requires neutralization of negatively charged residues. This uses cytoplasmic protons, contributing pH regulation and stabilizes the homodecamer. Component of the acid-resistance (AR) system allowing enteric pathogens to survive the acidic environment in the stomach. ADC can be found in two forms: biodegradative (this enzyme) and biosynthetic (speA). The biodegradative form plays a role in regulating pH by consuming proteins. Converts arginine imported by AdiC to agmatine which is then exported by AdiC. This chain is Biodegradative arginine decarboxylase (adiA), found in Escherichia coli (strain K12).